Reading from the N-terminus, the 390-residue chain is F-box/kelch-repeat protein At3g04660 (390 aa).

The F-box domain maps to 18-67 (YDPSSILPLELKIEILMKSPPKSIAKLGFVSNHWSSIIRGQVFTDLYMRR). Kelch repeat units follow at residues 115–161 (FSPP…FGYD) and 272–323 (MVDH…DQRV).

Part of a SCF (ASK-cullin-F-box) protein ligase complex. Interacts with SKP1A/ASK1, SKP1B/ASK2, ASK11 and ASK13.

Its subcellular location is the nucleus. It functions in the pathway protein modification; protein ubiquitination. Component of SCF(ASK-cullin-F-box) E3 ubiquitin ligase complexes, which may mediate the ubiquitination and subsequent proteasomal degradation of target proteins. This chain is F-box/kelch-repeat protein At3g04660, found in Arabidopsis thaliana (Mouse-ear cress).